We begin with the raw amino-acid sequence, 426 residues long: Gamma-glutamyl phosphate reductase (426 aa).

This sequence belongs to the gamma-glutamyl phosphate reductase family.

The protein resides in the cytoplasm. It carries out the reaction L-glutamate 5-semialdehyde + phosphate + NADP(+) = L-glutamyl 5-phosphate + NADPH + H(+). It functions in the pathway amino-acid biosynthesis; L-proline biosynthesis; L-glutamate 5-semialdehyde from L-glutamate: step 2/2. Catalyzes the NADPH-dependent reduction of L-glutamate 5-phosphate into L-glutamate 5-semialdehyde and phosphate. The product spontaneously undergoes cyclization to form 1-pyrroline-5-carboxylate. The protein is Gamma-glutamyl phosphate reductase of Nitrobacter winogradskyi (strain ATCC 25391 / DSM 10237 / CIP 104748 / NCIMB 11846 / Nb-255).